The following is a 469-amino-acid chain: Ufm1-specific protease 2 (469 aa).

M1 bears the N-acetylmethionine mark. Catalysis depends on residues C302, D426, and H428.

Belongs to the peptidase C78 family. In terms of tissue distribution, expressed in brain.

Its subcellular location is the endoplasmic reticulum. It is found in the cytoplasm. It localises to the nucleus. Functionally, thiol-dependent isopeptidase that specifically cleaves UFM1, a ubiquitin-like modifier protein, from conjugated proteins, such as CD274/PD-L1, CYB5R3, DDRGK1, MRE11, RPL26/uL24, TRIP4 and RPL26/uL24. While it is also able to mediate the processing of UFM1 precursors, a prerequisite for conjugation reactions, UFSP2 mainly acts as a protein deUFMylase that mediates deconjugation of UFM1 from target proteins. Mediates deUFMylation of RPL26/uL24, a critical step to release the UFM1 ribosome E3 ligase (UREL) complex during the recycling of 60S ribosome subunits from the endoplasmic reticulum. Catalyzes deUFMylation of TRIP4, regulating intracellular nuclear receptors transactivation and thereby regulate cell proliferation and differentiation. The protein is Ufm1-specific protease 2 of Homo sapiens (Human).